A 419-amino-acid polypeptide reads, in one-letter code: Heparan-sulfate 6-O-sulfotransferase 3-B (419 aa).

Residues 1-7 (MNDKPNK) lie on the Cytoplasmic side of the membrane. Residues 8 to 28 (WIFIPILAILFVMIGYQYVCP) form a helical; Signal-anchor for type II membrane protein membrane-spanning segment. At 29–419 (AGGQACHFRT…EDYASQVVRW (391 aa)) the chain is on the lumenal side. The N-linked (GlcNAc...) asparagine glycan is linked to N77. 101-109 (HIQKTGGTT) serves as a coordination point for 3'-phosphoadenylyl sulfate. Residues 131–132 (KK), R148, W153, and H158 each bind substrate. The active-site Proton acceptor is H158. Residues R191 and S199 each contribute to the 3'-phosphoadenylyl sulfate site. Residues H203 and W210 each contribute to the substrate site. Residues N270 and N275 are each glycosylated (N-linked (GlcNAc...) asparagine). Residue 323–325 (TQI) coordinates 3'-phosphoadenylyl sulfate. A glycan (N-linked (GlcNAc...) asparagine) is linked at N326. Residue 329–330 (RA) coordinates 3'-phosphoadenylyl sulfate. Residues N393 and N402 are each glycosylated (N-linked (GlcNAc...) asparagine).

Belongs to the sulfotransferase 6 family. In terms of tissue distribution, in early somitogenesis, expressed in presumptive forebrain and midbrain, tail bud and Kupffer's vesicle. During mid-somitogenesis, ubiquitous expression which is strongest in the somites and eye. During late somitogenesis, predominantly expressed in eye, hindbrain and ventral somites. At 24 hours post-fertilization (hpf), restricted to lens and neural retina, brain, otic vesicle and somites. At 36 hpf, brain expression is restricted to telencephalon. At 48 hpf, restricted to telencephalon and pectoral fin.

Its subcellular location is the membrane. The enzyme catalyses alpha-D-glucosaminyl-[heparan sulfate](n) + 3'-phosphoadenylyl sulfate = 6-sulfo-alpha-D-glucosaminyl-[heparan sulfate](n) + adenosine 3',5'-bisphosphate + H(+). In terms of biological role, 6-O-sulfation enzyme which catalyzes the transfer of sulfate from 3'-phosphoadenosine 5'-phosphosulfate (PAPS) to position 6 of the N-sulfoglucosamine residue (GlcNS) of heparan sulfate. This is Heparan-sulfate 6-O-sulfotransferase 3-B from Danio rerio (Zebrafish).